The following is a 377-amino-acid chain: DNA replication and repair protein RecF (377 aa).

30–37 (GPNGVGKT) is an ATP binding site.

It belongs to the RecF family.

The protein localises to the cytoplasm. The RecF protein is involved in DNA metabolism; it is required for DNA replication and normal SOS inducibility. RecF binds preferentially to single-stranded, linear DNA. It also seems to bind ATP. This Salinispora tropica (strain ATCC BAA-916 / DSM 44818 / JCM 13857 / NBRC 105044 / CNB-440) protein is DNA replication and repair protein RecF.